A 252-amino-acid chain; its full sequence is SIGTGYDLSSTTFSPDGRVFQVEYAAKAVDNSGTALGLRVKDGVVLAVEKLLVSKMLVPNTNRRIHTVDRHCGLAMSGLVADGRQLVSRGRAEATSYREFYGTDISGKVLNERLSNFVQLYSLYGSVRPFGTSVILGCVDKNGPQLYMIEPSGISWGYFGVAIGKGARAAKTEIEKLKLSEMTAREAIKEAAKIIYSVHDDAKDKAFELELSWVCEETGNLHKFVPKDLLEEAEKYAKQALEEEEDMSEEED.

Belongs to the peptidase T1A family. The 26S proteasome consists of a 20S proteasome core and two 19S regulatory subunits. The 20S proteasome core is composed of 28 subunits that are arranged in four stacked rings, resulting in a barrel-shaped structure. The two end rings are each formed by seven alpha subunits, and the two central rings are each formed by seven beta subunits. The catalytic chamber with the active sites is on the inside of the barrel.

The protein localises to the cytoplasm. It is found in the nucleus. Functionally, the proteasome is a multicatalytic proteinase complex which is characterized by its ability to cleave peptides with Arg, Phe, Tyr, Leu, and Glu adjacent to the leaving group at neutral or slightly basic pH. The proteasome has an ATP-dependent proteolytic activity. The polypeptide is Proteasome subunit alpha type-3 (Acanthamoeba castellanii (Amoeba)).